A 339-amino-acid polypeptide reads, in one-letter code: Phenylalanine--tRNA ligase alpha subunit (339 aa).

Glu-250 contributes to the Mg(2+) binding site.

This sequence belongs to the class-II aminoacyl-tRNA synthetase family. Phe-tRNA synthetase alpha subunit type 1 subfamily. Tetramer of two alpha and two beta subunits. Requires Mg(2+) as cofactor.

The protein resides in the cytoplasm. It catalyses the reaction tRNA(Phe) + L-phenylalanine + ATP = L-phenylalanyl-tRNA(Phe) + AMP + diphosphate + H(+). The sequence is that of Phenylalanine--tRNA ligase alpha subunit from Flavobacterium psychrophilum (strain ATCC 49511 / DSM 21280 / CIP 103535 / JIP02/86).